Reading from the N-terminus, the 184-residue chain is MKNLTDSFVYLGHWPSAGSFGFNTDILATNPINLSVVFGVLIFFGKGVLNDLLDNRKQRILNTIRNSEELREAAIQQLENARARLRKVETEADQFRVNGYSEIEREKLNLINSTYKTLKQLENYKNETILFEQQRTINQVRERVFQQALQGAIGTLNSCLSNELHLRTINANIGMFGTMKEITD.

Residues 27-49 (LATNPINLSVVFGVLIFFGKGVL) form a helical membrane-spanning segment.

Belongs to the ATPase B chain family. F-type ATPases have 2 components, F(1) - the catalytic core - and F(0) - the membrane proton channel. F(1) has five subunits: alpha(3), beta(3), gamma(1), delta(1), epsilon(1). F(0) has four main subunits: a(1), b(1), b'(1) and c(10-14). The alpha and beta chains form an alternating ring which encloses part of the gamma chain. F(1) is attached to F(0) by a central stalk formed by the gamma and epsilon chains, while a peripheral stalk is formed by the delta, b and b' chains.

It localises to the plastid. The protein localises to the chloroplast thylakoid membrane. In terms of biological role, f(1)F(0) ATP synthase produces ATP from ADP in the presence of a proton or sodium gradient. F-type ATPases consist of two structural domains, F(1) containing the extramembraneous catalytic core and F(0) containing the membrane proton channel, linked together by a central stalk and a peripheral stalk. During catalysis, ATP synthesis in the catalytic domain of F(1) is coupled via a rotary mechanism of the central stalk subunits to proton translocation. Component of the F(0) channel, it forms part of the peripheral stalk, linking F(1) to F(0). This Crucihimalaya wallichii (Rock-cress) protein is ATP synthase subunit b, chloroplastic.